The primary structure comprises 563 residues: NAD-dependent malic enzyme (563 aa).

Residue Tyr-101 is the Proton donor of the active site. Arg-154 is a binding site for NAD(+). The Proton acceptor role is filled by Lys-172. A divalent metal cation is bound by residues Glu-243, Asp-244, and Asp-267. NAD(+) is bound by residues Asp-267 and Asn-416.

This sequence belongs to the malic enzymes family. Homotetramer. Mg(2+) is required as a cofactor. It depends on Mn(2+) as a cofactor.

It catalyses the reaction (S)-malate + NAD(+) = pyruvate + CO2 + NADH. It carries out the reaction oxaloacetate + H(+) = pyruvate + CO2. The polypeptide is NAD-dependent malic enzyme (Pseudomonas syringae pv. tomato (strain ATCC BAA-871 / DC3000)).